We begin with the raw amino-acid sequence, 409 residues long: Odorant receptor 35a (409 aa).

The Cytoplasmic segment spans residues 1-35 (MVRYVPRFADGQKVKLAWPLAVFRLNHIFWPLDPS). Residues 36-56 (TGKWGRYLDKVLAVAMSLVFM) traverse the membrane as a helical segment. Over 57–64 (QHNDAELR) the chain is Extracellular. The chain crosses the membrane as a helical span at residues 65–85 (YLRFEASNRNLDAFLTGMPTY). The Cytoplasmic portion of the chain corresponds to 86-139 (LILVEAQFRSLHILLHFEKLQKFLEIFYANIYIDPRKEPEMFRKVDGKMIINRL). A helical transmembrane segment spans residues 140 to 160 (VSAMYGAVISLYLIAPVFSII). A glycan (N-linked (GlcNAc...) asparagine) is linked at N161. At 161–177 (NQSKDFLYSMIFPFDSD) the chain is on the extracellular side. A helical membrane pass occupies residues 178-198 (PLYIFVPLLLTNVWVGIVIDT). At 199-273 (MMFGETNLLC…QQLEAQYTVR (75 aa)) the chain is on the cytoplasmic side. Residues 274–294 (VFIMFAFAAGLLCALSFKAYT) form a helical membrane-spanning segment. Residues 295–302 (NPMANYIY) are Extracellular-facing. Residues 303–323 (AIWFGAKTVELLSLGQIGSDL) traverse the membrane as a helical segment. The Cytoplasmic portion of the chain corresponds to 324-379 (AFTTDSLSTMYYLTHWEQILQYSTNPSENLRLLKLINLAIEMNSKPFYVTGLKYFR). Residues 380–400 (VSLQAGLKILQASFSYFTFLT) traverse the membrane as a helical segment. The Extracellular portion of the chain corresponds to 401–409 (SMQRRQMSN).

The protein belongs to the insect chemoreceptor superfamily. Heteromeric odorant receptor channel (TC 1.A.69) family. Or1a subfamily. In terms of assembly, interacts with Orco. Complexes exist early in the endomembrane system in olfactory sensory neurons (OSNs), coupling these complexes to the conserved ciliary trafficking pathway. In terms of tissue distribution, expressed in ac3B olfactory sensory neurons in the antenna.

The protein localises to the cell membrane. In terms of biological role, odorant receptor which mediates acceptance or avoidance behavior, depending on its substrates. The odorant receptor repertoire encodes a large collection of odor stimuli that vary widely in identity, intensity, and duration. Forms a complex with Orco to form odorant-sensing units, providing sensitive and prolonged odorant signaling and calcium permeability. Involved in the behavioral responses to esters. Involved in the behavioral responses to butanol, pentanol, hexanol, octanol, propyl acetate, and butyl acetate. The protein is Odorant receptor 35a (Or35a) of Drosophila melanogaster (Fruit fly).